Reading from the N-terminus, the 337-residue chain is Ribosomal RNA small subunit methyltransferase C (337 aa).

The protein belongs to the methyltransferase superfamily. RsmC family. Monomer.

Its subcellular location is the cytoplasm. The enzyme catalyses guanosine(1207) in 16S rRNA + S-adenosyl-L-methionine = N(2)-methylguanosine(1207) in 16S rRNA + S-adenosyl-L-homocysteine + H(+). Specifically methylates the guanine in position 1207 of 16S rRNA in the 30S particle. The polypeptide is Ribosomal RNA small subunit methyltransferase C (Acinetobacter baumannii (strain ACICU)).